Consider the following 641-residue polypeptide: FAD-binding monooxygenase ausB (641 aa).

A disordered region spans residues 1-68; it reads MAIGPKPESI…DSTTNVPYSL (68 aa). Over residues 49 to 68 the composition is skewed to polar residues; that stretch reads WLTSTDQPQPDSTTNVPYSL. Residues 115–118, 127–128, and Tyr-133 contribute to the FAD site; these read TWYW and DI. Residue 125 to 127 coordinates NADP(+); that stretch reads MCD. Residues 272-278 and 295-296 each bind NADP(+); these read TGSTAVQ and RT.

It belongs to the FAD-binding monooxygenase family. Requires FAD as cofactor.

The enzyme catalyses protoaustinoid A + AH2 + O2 = berkeleyone A + A + H2O. It participates in secondary metabolite biosynthesis; terpenoid biosynthesis. FAD-binding monooxygenase; part of the gene cluster A that mediates the biosynthesis of the fungal meroterpenoid acetoxydehydroaustin. The first step of the pathway is the synthesis of 3,5-dimethylorsellinic acid by the polyketide synthase ausA. 3,5-dimethylorsellinic acid is then prenylated by the polyprenyl transferase ausN. Further epoxidation by the FAD-dependent monooxygenase ausM and cyclization by the probable terpene cyclase ausL lead to the formation of protoaustinoid A. Protoaustinoid A is then oxidized to spiro-lactone preaustinoid A3 by the combined action of the FAD-binding monooxygenases ausB and ausC, and the dioxygenase ausE. Acid-catalyzed keto-rearrangement and ring contraction of the tetraketide portion of preaustinoid A3 by ausJ lead to the formation of preaustinoid A4. The aldo-keto reductase ausK, with the help of ausH, is involved in the next step by transforming preaustinoid A4 into isoaustinone which is in turn hydroxylated by the P450 monooxygenase ausI to form austinolide. The cytochrome P450 monooxygenase ausG then modifies austinolide to austinol. Austinol is further acetylated to austin by the O-acetyltransferase ausP, which spontaneously changes to dehydroaustin. The cytochrome P450 monooxygenase then converts dehydroaustin is into 7-dehydrodehydroaustin. The hydroxylation catalyzed by ausR permits the second O-acetyltransferase ausQ to add an additional acetyl group to the molecule, leading to the formation of acetoxydehydroaustin. Due to genetic rearrangements of the clusters and the subsequent loss of some enzymes, the end product of the Penicillium brasilianum austinoid biosynthesis clusters is acetoxydehydroaustin. This is FAD-binding monooxygenase ausB from Penicillium brasilianum.